Reading from the N-terminus, the 618-residue chain is Dihydroxy-acid dehydratase (618 aa).

Mg(2+) is bound at residue D81. [2Fe-2S] cluster is bound at residue C122. Mg(2+)-binding residues include D123 and K124. K124 bears the N6-carboxylysine mark. C195 serves as a coordination point for [2Fe-2S] cluster. Position 491 (E491) interacts with Mg(2+). S517 (proton acceptor) is an active-site residue.

This sequence belongs to the IlvD/Edd family. In terms of assembly, homodimer. The cofactor is [2Fe-2S] cluster. Requires Mg(2+) as cofactor.

It carries out the reaction (2R)-2,3-dihydroxy-3-methylbutanoate = 3-methyl-2-oxobutanoate + H2O. The enzyme catalyses (2R,3R)-2,3-dihydroxy-3-methylpentanoate = (S)-3-methyl-2-oxopentanoate + H2O. It functions in the pathway amino-acid biosynthesis; L-isoleucine biosynthesis; L-isoleucine from 2-oxobutanoate: step 3/4. The protein operates within amino-acid biosynthesis; L-valine biosynthesis; L-valine from pyruvate: step 3/4. Its function is as follows. Functions in the biosynthesis of branched-chain amino acids. Catalyzes the dehydration of (2R,3R)-2,3-dihydroxy-3-methylpentanoate (2,3-dihydroxy-3-methylvalerate) into 2-oxo-3-methylpentanoate (2-oxo-3-methylvalerate) and of (2R)-2,3-dihydroxy-3-methylbutanoate (2,3-dihydroxyisovalerate) into 2-oxo-3-methylbutanoate (2-oxoisovalerate), the penultimate precursor to L-isoleucine and L-valine, respectively. This Rhodopseudomonas palustris (strain TIE-1) protein is Dihydroxy-acid dehydratase.